The primary structure comprises 739 residues: Phosphoribosylformylglycinamidine synthase subunit PurL (739 aa).

H54 is a catalytic residue. Y57 and K96 together coordinate ATP. A Mg(2+)-binding site is contributed by E98. Substrate-binding positions include 99-102 (SHNH) and R121. H100 acts as the Proton acceptor in catalysis. Position 122 (D122) interacts with Mg(2+). Substrate is bound at residue Q245. D275 contributes to the Mg(2+) binding site. 319–321 (ESQ) contacts substrate. D504 and G541 together coordinate ATP. N542 contacts Mg(2+). Residue S544 coordinates substrate.

This sequence belongs to the FGAMS family. As to quaternary structure, monomer. Part of the FGAM synthase complex composed of 1 PurL, 1 PurQ and 2 PurS subunits.

The protein resides in the cytoplasm. The enzyme catalyses N(2)-formyl-N(1)-(5-phospho-beta-D-ribosyl)glycinamide + L-glutamine + ATP + H2O = 2-formamido-N(1)-(5-O-phospho-beta-D-ribosyl)acetamidine + L-glutamate + ADP + phosphate + H(+). It participates in purine metabolism; IMP biosynthesis via de novo pathway; 5-amino-1-(5-phospho-D-ribosyl)imidazole from N(2)-formyl-N(1)-(5-phospho-D-ribosyl)glycinamide: step 1/2. Functionally, part of the phosphoribosylformylglycinamidine synthase complex involved in the purines biosynthetic pathway. Catalyzes the ATP-dependent conversion of formylglycinamide ribonucleotide (FGAR) and glutamine to yield formylglycinamidine ribonucleotide (FGAM) and glutamate. The FGAM synthase complex is composed of three subunits. PurQ produces an ammonia molecule by converting glutamine to glutamate. PurL transfers the ammonia molecule to FGAR to form FGAM in an ATP-dependent manner. PurS interacts with PurQ and PurL and is thought to assist in the transfer of the ammonia molecule from PurQ to PurL. In Lactococcus lactis subsp. cremoris (strain SK11), this protein is Phosphoribosylformylglycinamidine synthase subunit PurL.